The sequence spans 1821 residues: Latent-transforming growth factor beta-binding protein 2 (1821 aa).

The first 35 residues, 1–35 (MRPRTKARSPGRALRNPWRGFLPLTLALFVGAGHA), serve as a signal peptide directing secretion. Disordered regions lie at residues 38-58 (DPVG…RPGG) and 81-165 (GLQP…RLTG). Residues 94-115 (SPRRPTEAEARRPSRAQQSRRV) form a heparin-binding region. 2 stretches are compositionally biased toward low complexity: residues 108–120 (RAQQ…PPAQ) and 129–145 (QQQP…LPRL). The N-linked (GlcNAc...) asparagine glycan is linked to N181. One can recognise an EGF-like 1 domain in the interval 187-219 (IKPVCEPPCQNRGSCSRPQLCVCRSGFRGARCE). 3 disulfides stabilise this stretch: C191-C201, C195-C207, and C209-C218. The segment at 229–339 (PQNSRLAPRR…AVPLEHPSSP (111 aa)) is disordered. The segment at 232–249 (SRLAPRRWAERSPNLRRS) is heparin-binding. A compositionally biased stretch (pro residues) spans 262 to 274 (PPAPQSPPAPQSP). 2 stretches are compositionally biased toward polar residues: residues 280–292 (SGLS…QQHV) and 304–314 (ATASSQLSSNA). Residue N343 is glycosylated (N-linked (GlcNAc...) asparagine). 344-354 (LTEKIKKIKIV) is a heparin binding site. A Cell attachment site motif is present at residues 375–377 (RGD). In terms of domain architecture, EGF-like 2 spans 396 to 428 (RIYFCQIPCLNGGRCIGRDECWCPANSTGKFCH). 3 disulfide bridges follow: C400/C410, C404/C416, and C418/C427. Residue N421 is glycosylated (N-linked (GlcNAc...) asparagine). Phosphoserine is present on S506. Residues 510-544 (RPPPWLPASPGHSLWDSNNIPARSGEPPRPLPPAA) form a disordered region. Positions 552-604 (GRCYLNTVNGQCANPLLELTTQEDCCGSVGAFWGVTLCAPCPPRPASPVIENG) constitute a TB 1 domain. 3 disulfide bridges follow: C554–C576, C563–C589, and C577–C592. N616 is a glycosylation site (N-linked (GlcNAc...) asparagine). The EGF-like 3; calcium-binding domain occupies 622-662 (DINECLTLGLCKDAECVNTRGSYLCTCRPGLMLDPSRSRCV). 7 cysteine pairs are disulfide-bonded: C626/C637, C632/C646, C648/C661, C674/C696, C683/C709, C697/C712, and C698/C724. The 53-residue stretch at 672-724 (GLCYRSLGPGTCTLPLAQRITKQICCCSRVGKAWGSECEKCPLPGTEAFREIC) folds into the TB 2 domain. The span at 744–757 (AEEEELARPPREQG) shows a compositional bias: basic and acidic residues. The segment at 744–772 (AEEEELARPPREQGQRSSGALPGPAERQP) is disordered. N811 is a glycosylation site (N-linked (GlcNAc...) asparagine). The region spanning 844–886 (GIDRCAAGATNVCGPGTCVNLPDGYRCVCSPGYQLHPSQAYCT) is the EGF-like 4 domain. 49 cysteine pairs are disulfide-bonded: C848–C861, C856–C870, C872–C885, C891–C902, C896–C911, C913–C928, C934–C945, C940–C954, C956–C968, C974–C985, C980–C994, C997–C1008, C1014–C1025, C1020–C1034, C1036–C1049, C1055–C1066, C1061–C1075, C1078–C1091, C1097–C1108, C1103–C1117, C1120–C1133, C1139–C1151, C1146–C1160, C1162–C1174, C1180–C1192, C1186–C1201, C1203–C1216, C1222–C1233, C1228–C1242, C1244–C1257, C1263–C1276, C1271–C1285, C1289–C1301, C1307–C1319, C1313–C1328, C1330–C1343, C1349–C1361, C1356–C1370, C1372–C1386, C1413–C1436, C1423–C1448, C1437–C1451, C1438–C1463, C1489–C1502, C1497–C1511, C1513–C1526, C1532–C1542, C1537–C1551, and C1553–C1566. Positions 887 to 929 (DDNECLRDPCKGKGRCINRVGSYSCFCYPGYTLATSGATQECQ) constitute an EGF-like 5; calcium-binding domain. Residues 930-969 (DINECEQPGVCSGGQCTNTEGSYHCECDQGYIMVRKGHCQ) enclose the EGF-like 6; calcium-binding domain. In terms of domain architecture, EGF-like 7; calcium-binding spans 970–1009 (DINECRHPGTCPDGRCVNSPGSYTCLACEEGYRGQSGSCV). In terms of domain architecture, EGF-like 8; calcium-binding spans 1010-1050 (DVNECLTPGVCAHGKCTNLEGSFRCSCEQGYEVTSDEKGCQ). Residues 1051 to 1092 (DVDECASRASCPTGLCLNTEGSFACSACENGYWVNEDGTACE) form the EGF-like 9; calcium-binding domain. The region spanning 1093–1134 (DLDECAFPGVCPSGVCTNTAGSFSCKDCDGGYRPSPLGDSCE) is the EGF-like 10; calcium-binding domain. An EGF-like 11; calcium-binding domain is found at 1135–1175 (DVDECEDPQSSCLGGECKNTVGSYQCLCPQGFQLANGTVCE). N1170 carries N-linked (GlcNAc...) asparagine glycosylation. In terms of domain architecture, EGF-like 12; calcium-binding spans 1176-1217 (DVNECMGEEHCAPHGECLNSHGSFFCLCAPGFVSAEGGTSCQ). One can recognise an EGF-like 13; calcium-binding domain in the interval 1218-1258 (DVDECATTDPCVGGHCVNTEGSFNCLCETGFQPSPESGECV). The EGF-like 14; calcium-binding domain occupies 1259 to 1302 (DIDECEDYGDPVCGTWKCENSPGSYRCVLGCQPGFHMAPNGDCI). The 42-residue stretch at 1303–1344 (DIDECANDTMCGSHGFCDNTDGSFRCLCDQGFEISPSGWDCV) folds into the EGF-like 15; calcium-binding domain. N1309 carries N-linked (GlcNAc...) asparagine glycosylation. An EGF-like 16; calcium-binding domain is found at 1345 to 1387 (DVNECELMLAVCGAALCENVEGSFLCLCASDLEEYDAQEGHCR). Residues 1411 to 1463 (MDCYSGQKGHAPCSSVLGRNTTQAECCCTQGASWGDACDLCPSEDSAEFSEIC) form the TB 3 domain. A glycan (N-linked (GlcNAc...) asparagine) is linked at N1430. The EGF-like 17; calcium-binding domain occupies 1485 to 1527 (DADECVIFGPGLCPNGRCLNTVPGYVCLCNPGFHYDASHKKCE). Residues 1528-1567 (DHDECQDLACENGECVNTEGSFHCFCSPPLTLDLSQQRCM) form the EGF-like 18; calcium-binding domain. N-linked (GlcNAc...) asparagine glycosylation occurs at N1568. The 53-residue stretch at 1584-1636 (DICWKKVTNDVCSEPLRGHRTTYTECCCQDGEAWSQQCALCPPRSSEVYAQLC) folds into the TB 4 domain. Intrachain disulfides connect C1586-C1609, C1595-C1621, C1610-C1624, C1611-C1636, C1737-C1748, C1743-C1757, C1759-C1772, C1778-C1793, C1788-C1802, and C1804-C1817. The interval 1639–1821 (ARIEAEREAG…AGPPHCTAKE (183 aa)) is C-terminal domain. In terms of domain architecture, EGF-like 19; calcium-binding spans 1733-1773 (QAEECGILNGCENGRCVRVREGYTCDCFEGFQLDAAHMACV). Residues 1774 to 1818 (DVNECDDLNGPAVLCVHGYCENTEGSYRCHCSPGYVAEAGPPHCT) form the EGF-like 20; calcium-binding domain.

The protein belongs to the LTBP family. As to quaternary structure, forms part of the large latent transforming growth factor beta precursor complex; removal is essential for activation of complex. Interacts with SDC4. Interacts (via C-terminal domain) with FBN1 (via N-terminal domain) in a Ca(+2)-dependent manner. N-Glycosylated. In terms of processing, contains hydroxylated asparagine residues. Expressed in the aorta (at protein level). Expressed in lung, weakly expressed in heart, placenta, liver and skeletal muscle.

It localises to the secreted. The protein localises to the extracellular space. The protein resides in the extracellular matrix. Functionally, may play an integral structural role in elastic-fiber architectural organization and/or assembly. This Homo sapiens (Human) protein is Latent-transforming growth factor beta-binding protein 2 (LTBP2).